The following is a 730-amino-acid chain: Ribosomal RNA large subunit methyltransferase K/L (730 aa).

The 112-residue stretch at 46–157 (TAYRLCLWSR…RGEAILSLDL (112 aa)) folds into the THUMP domain. Positions 399–408 (AAVEEGEPRR) are enriched in basic and acidic residues. The interval 399-418 (AAVEEGEPRRQAPVASEPAR) is disordered.

This sequence belongs to the methyltransferase superfamily. RlmKL family.

It localises to the cytoplasm. The catalysed reaction is guanosine(2445) in 23S rRNA + S-adenosyl-L-methionine = N(2)-methylguanosine(2445) in 23S rRNA + S-adenosyl-L-homocysteine + H(+). It catalyses the reaction guanosine(2069) in 23S rRNA + S-adenosyl-L-methionine = N(2)-methylguanosine(2069) in 23S rRNA + S-adenosyl-L-homocysteine + H(+). Its function is as follows. Specifically methylates the guanine in position 2445 (m2G2445) and the guanine in position 2069 (m7G2069) of 23S rRNA. The protein is Ribosomal RNA large subunit methyltransferase K/L of Pseudomonas entomophila (strain L48).